We begin with the raw amino-acid sequence, 196 residues long: ECF RNA polymerase sigma factor SigK (196 aa).

The tract at residues 39–105 (YDQTRARVYG…RAVDRVRSEQ (67 aa)) is sigma-70 factor domain-2. The Polymerase core binding motif lies at 62-65 (ETTQ). Residues 142 to 191 (CLDSLTDVQRECIQLAYYDGLTYAQVADRLAANLATIKSRMRDGIRALRK) form a sigma-70 factor domain-4 region. The segment at residues 164 to 183 (YAQVADRLAANLATIKSRMR) is a DNA-binding region (H-T-H motif).

Belongs to the sigma-70 factor family. ECF subfamily. As to quaternary structure, interacts transiently with the RNA polymerase catalytic core formed by RpoA, RpoB, RpoC and RpoZ (2 alpha, 1 beta, 1 beta' and 1 omega subunit) to form the RNA polymerase holoenzyme that can initiate transcription. Interacts (via sigma-70 factor domain 4) with anti-sigma-K factor RskA.

Its function is as follows. Sigma factors are initiation factors that promote the attachment of RNA polymerase to specific initiation sites and are then released. Extracytoplasmic function (ECF) sigma factors are held in an inactive form by an anti-sigma factor until released by regulated intramembrane proteolysis. The sequence is that of ECF RNA polymerase sigma factor SigK (sigK) from Mycolicibacterium vanbaalenii (strain DSM 7251 / JCM 13017 / BCRC 16820 / KCTC 9966 / NRRL B-24157 / PYR-1) (Mycobacterium vanbaalenii).